Here is a 63-residue protein sequence, read N- to C-terminus: Large ribosomal subunit protein bL35 (63 aa).

The protein belongs to the bacterial ribosomal protein bL35 family.

The polypeptide is Large ribosomal subunit protein bL35 (Campylobacter concisus (strain 13826)).